A 328-amino-acid chain; its full sequence is Biotin synthase (328 aa).

The Radical SAM core domain maps to 48–278; sequence FTGNSASLCS…GKSLSVCGGR (231 aa). Cys66, Cys70, and Cys73 together coordinate [4Fe-4S] cluster. Ser143 and Cys203 together coordinate [2Fe-2S] cluster.

The protein belongs to the radical SAM superfamily. Biotin synthase family. As to quaternary structure, homodimer. Requires [4Fe-4S] cluster as cofactor. The cofactor is [2Fe-2S] cluster.

It carries out the reaction (4R,5S)-dethiobiotin + (sulfur carrier)-SH + 2 reduced [2Fe-2S]-[ferredoxin] + 2 S-adenosyl-L-methionine = (sulfur carrier)-H + biotin + 2 5'-deoxyadenosine + 2 L-methionine + 2 oxidized [2Fe-2S]-[ferredoxin]. Its pathway is cofactor biosynthesis; biotin biosynthesis; biotin from 7,8-diaminononanoate: step 2/2. Its function is as follows. Catalyzes the conversion of dethiobiotin (DTB) to biotin by the insertion of a sulfur atom into dethiobiotin via a radical-based mechanism. The chain is Biotin synthase from Pelobacter propionicus (strain DSM 2379 / NBRC 103807 / OttBd1).